Consider the following 128-residue polypeptide: Global transcriptional regulator Spx 1 (128 aa).

C10 and C13 are joined by a disulfide.

The protein belongs to the ArsC family. Spx subfamily. In terms of assembly, interacts with the C-terminal domain of the alpha subunit of the RNAP.

It localises to the cytoplasm. Global transcriptional regulator that plays a key role in stress response and exerts either positive or negative regulation of genes. Acts by interacting with the C-terminal domain of the alpha subunit of the RNA polymerase (RNAP). This interaction can enhance binding of RNAP to the promoter region of target genes and stimulate their transcription, or block interaction of RNAP with activator. The protein is Global transcriptional regulator Spx 1 of Lactococcus lactis subsp. lactis (strain IL1403) (Streptococcus lactis).